Here is a 201-residue protein sequence, read N- to C-terminus: dITP/XTP pyrophosphatase (201 aa).

8–13 is a substrate binding site; that stretch reads TTNENK. Asp68 serves as the catalytic Proton acceptor. A Mg(2+)-binding site is contributed by Asp68. Substrate-binding positions include Ser69, 155–158, Lys177, and 182–183; these read FGYD and HR.

The protein belongs to the HAM1 NTPase family. As to quaternary structure, homodimer. Mg(2+) serves as cofactor.

It catalyses the reaction XTP + H2O = XMP + diphosphate + H(+). The catalysed reaction is dITP + H2O = dIMP + diphosphate + H(+). It carries out the reaction ITP + H2O = IMP + diphosphate + H(+). Its function is as follows. Pyrophosphatase that catalyzes the hydrolysis of nucleoside triphosphates to their monophosphate derivatives, with a high preference for the non-canonical purine nucleotides XTP (xanthosine triphosphate), dITP (deoxyinosine triphosphate) and ITP. Seems to function as a house-cleaning enzyme that removes non-canonical purine nucleotides from the nucleotide pool, thus preventing their incorporation into DNA/RNA and avoiding chromosomal lesions. In Borreliella burgdorferi (strain ATCC 35210 / DSM 4680 / CIP 102532 / B31) (Borrelia burgdorferi), this protein is dITP/XTP pyrophosphatase.